The chain runs to 3099 residues: MASITFGNACTVVFGQVRKEEVTAGPVAVNLNEGTRMVVVPTAAQMATPTPSVSIKIINRWSNKAVSSYERQVEDVFANFFAKKERSDELLTRYYGKVVQKGNKLMVKRAPLHVARVLEKQRLQDIEDEKAFLQYRDAGVHVAGSVKFTDTRSRGQTVSFRTEHYKPTGKIVQKKKAQKQRANADVDHLIDEVMKICSADCKQVEFISMGKRRLTAKFKLFGKSVIPCIHLAHEQGRRLRRELDPRIHEQVIAHLVTGRKVRELIKDDMVTYGWSGAILNKNLFKRTPFRWDEVVIRGRLYGKLVDARSKLSECSKDKIHQYSSFEAQFWKGWKNKFDTLHPHNKDHICEPTINNEKCGEIVATIFQAIHPVIKVSCSTCRERLTKASNEELNEYLATNLACHKATFDDMRQQHATVNTVLNKIEQTSLANPNLKDSMEIVRLLQNLNQTQARQLMKVNNTLLKGNVATSEEFSDATTQLLEVTRWYAKHLSLVDEGSISSFRNKATSKSLINPSLLCDNQLDRNGNFVWGERGRHSKRFFENFFEEVVPGGGYKKYQIRNSPNCTRKLAIGNLIVPMSLERARNALIGESVERLPVTEACVSRVNGAFMHVASCVTSDNGSAHFSPLYSPTKRHLVVGTTGDSKYIDLPATESDKMYVAKEGYCYINIFLAMLVNVNEDSAKDFTKMIRDTIVPMLGTWPSMMDVATACYILTVFHPETKSAELPRILVDHTNKTMHVIDSFGSISTGYHILKAGTVSQLIHFASNELVSEMKHYVVGGEAPHARRMRMEKALIQGIFKPKQLVYLIEEDPYILMMSLVSPTLLINLFNVGGLEVAMKHWIKKEMNIGLIFSMLSSLAQKVSRADLVNEQITMIDANAAQFIETLAGIDVENPMRNELVSALTMMLARSDVDSTLNKTGFTGFSDTLLEMREKIIGDELNKVWSELSWWEKFSSIIFSRRARKHIMAPLPNTKLHAIDDRYAISCTWLHGKIKARFNGAKSATLEVCKKVTSILKRNTVDSILYICRKCYSDIFYFVNVMLISSMILSVIYTMHKMVIESRAHKQAMVIMKMREDELVVKQMYDQYCKLANETPTKEEFFQYVCKMNKELGERIAPEFEEGSLVVYQAKTETELGLEKVVAYLALIAMIFDGERSDAVFRALSKLKTVFGTLGETVRYQSLDEIESVADEKKMTIDFELEGSEASSSTVMSAKFSDWWYKQLETNRVVPHYRIGGEFVEFTRKTAAEVVNNMRASNASEFLVRGAVGSGKSTGLPHLLAQKGRVLLLEPTRPLAENVCKQLRQAPFQQNPTLRMRGLTTFGSSNIVIMTSGFALHYYANNPTKLQEYDFVMIDESHTMDASAMAFYCLVREYNFQGKIIKVSATPPGKECEFKTQFDVALLIEEDLSFQQFAQSQGQGGNADMTKHGDNILVYVASYNDVDQLAELLIRGNHFVTKVDGRTMKMGSTEIVSKGTASKKHYIIATNIIENGVTLDVDVVVDFGQKVVAELDGDSRCMRYRKVAVSYGERIQRLGRVGRVKKGTALRIGHTEHGISEIPASISTEAAFLCFAYGLPVITHNVTVSILANCTVQQARTMMLFELSPFFLADLVKYNGSMHPEVHKLLKPYKLRDSEIELCKLAIPNSSIGRWLSVHEYAKLGIKIHAVDSVRIPFAGRGIPDKLYSELWHIIQEHKHEAGFGRLTSASASTIAYTLSTDPEAIPRTIALLDNLIAEEMQKKAHFEALNSTLCSQRFTLKNIVDTVRQRYMKDHSKHNIEVLQSARSQILEFNSATHDFKKVASLLGYGFLDTVQYQSKNELSKRLGLKGRWNKSLVTNDLLVCGMVLFGGVWMVWEYAKSAMNEPVRYQGKRQNQKLKFRDARDRKVGREVYGDDGTIEHFFGEAYTKKGKSKGNHTVKGMGRKTRRFIHMYGFDPTEYSFVRFVDPLTGYAIDENITCDISLVQDEVAEVRKQFINEDEISAQSIAENPGIIAYYMSRNADKALKIDLTPHNPLAVGRGGSSIAGFPEREYELRQTGKPLEVKKSEVPPVSKDVVATEGKSMCRGLRNYNPIATSICKLVNESDGHSETIHGIGFGPVIITNSHLFRRNNGTLQIQTHHGVFRVKNSTQLQVSHMAKKDMIIIKMPCDVPPFPSKLRFRQPEQGEKAVLVGSLFQQKSITSSVSESTMVMPVNDSGYWRHWVSTKDGDCGLPLVSTVDGAILGLHGLTSTKSDRNYFVPFDEQFERDILANLEKLDWKRHWLHSSDLIAWGGMSLKENHPHDCFRTSKLVTDLLGLTKDSVEYQSGQDKWVLAGLENNLKAVAQSESQLVTKHVVKGQCMYFQEYLATHSTAEKFFKPLMGAYQPSKLNKEAFTKDLYKYQNEIIVGEVDKDAFDNAVEAVIYLLDDLGFGECAYVTDEEAILDSLNMKAAVGALYKGKKKEYFESLSEPEKHHIVQASCERLFYGEMGVWNGSLKAELRPKEKVALNKTRTFTAAPIDTLLGGKCCVDDFNNRFYSLNIEGPWTVGMTKFYGGWDKLMRKLPDGWRYCHADGSQFDSSLTPFLLNAVLAVRLMFMEDWWVGEQMLRNFYTEIIYTPILTPDGTIVKKFKGNNSGQPSTVVDNTLMVMIAMFYGMKKLNWTDEQIKERIVFFAXGDDLIIAVQPEHEGILDTLQRSLGELGLKYDFSERCDDRQELWFMSHQGHLVDGMYIPKLEQERIVSILEWDRSTVIEHRAEAICAAMIEAWGYPELLKQIRLFYAWILDHDMFKSLVAEGKLPYIAETALRKLYTDADATDVELEEYILRFTEVDEDEDHNDEVRYQSGENKSKVEVDAAAAKLKEKEKEKHKKTEEGTSEGTSQTKEPDVDTGSQGIVYVPKLAKITKKMRMPMVGGQVILHIPHLLDYKPEQVDLSNTRSSQQQFTAWYNGLKEAYEITDDTSMSVLMNGLMVWCIENGTSPNINGNWTMMDGHEQNEYPLKPVIENAKPTFRQIMHHFSDAAEAYIEMRNAEKPYMPRYGLQRNLRDFSYARIAFDFYEITSRTSAKAREIHMQMKAAALNNVAIKTFGLDGNVGTQDEDTERHTANDVNRNMHSLLGMRQM.

The Peptidase S30 domain maps to Gln-180–Tyr-322. Active-site for P1 proteinase activity residues include His-233, Glu-242, and Ser-275. An Involved in interaction with stylet and aphid transmission motif is present at residues Lys-374–Cys-377. The Involved in virions binding and aphid transmission signature appears at Pro-631–Lys-633. Positions Met-657–Gly-779 constitute a Peptidase C6 domain. Active-site for helper component proteinase activity residues include Cys-665 and His-738. The Helicase ATP-binding domain occupies Asn-1252–Glu-1404. Residue Gly-1265–Ser-1272 coordinates ATP. Positions Asp-1354–His-1357 match the DESH box motif. The 160-residue stretch at Asp-1423–Thr-1582 folds into the Helicase C-terminal domain. A Nuclear localization signal motif is present at residues Lys-1906–Thr-1915. Tyr-1930 is modified (O-(5'-phospho-RNA)-tyrosine). In terms of domain architecture, Peptidase C4 spans Gly-2058–Glu-2276. Catalysis depends on for nuclear inclusion protein A activity residues His-2103, Asp-2138, and Cys-2208. The RdRp catalytic domain occupies Trp-2545–Leu-2669. Residues Leu-2838 to Glu-2851 show a composition bias toward basic and acidic residues. The segment at Leu-2838 to Ser-2869 is disordered. Phosphothreonine is present on Thr-3082.

Belongs to the potyviridae genome polyprotein family. In terms of assembly, interacts with host eIF4E protein (via cap-binding region); this interaction mediates the translation of the VPg-viral RNA conjugates. Part of a complex that comprises VPg, RNA, host EIF4E and EIF4G; this interaction mediates the translation of the VPg-viral RNA conjugates. Post-translationally, VPg is uridylylated by the polymerase and is covalently attached to the 5'-end of the genomic RNA. This uridylylated form acts as a nucleotide-peptide primer for the polymerase. Potyviral RNA is expressed as two polyproteins which undergo post-translational proteolytic processing. Genome polyprotein is processed by NIa-pro, P1 and HC-pro proteinases resulting in the production of at least ten individual proteins. P3N-PIPO polyprotein is cleaved by P1 and HC-pro proteinases resulting in the production of three individual proteins. The P1 proteinase and the HC-pro cleave only their respective C-termini autocatalytically. 6K1 is essential for proper proteolytic separation of P3 from CI.

Its subcellular location is the host cytoplasmic vesicle. The protein resides in the host nucleus. The protein localises to the virion. It carries out the reaction RNA(n) + a ribonucleoside 5'-triphosphate = RNA(n+1) + diphosphate. It catalyses the reaction Hydrolyzes glutaminyl bonds, and activity is further restricted by preferences for the amino acids in P6 - P1' that vary with the species of potyvirus, e.g. Glu-Xaa-Xaa-Tyr-Xaa-Gln-|-(Ser or Gly) for the enzyme from tobacco etch virus. The natural substrate is the viral polyprotein, but other proteins and oligopeptides containing the appropriate consensus sequence are also cleaved.. The enzyme catalyses Hydrolyzes a Gly-|-Gly bond at its own C-terminus, commonly in the sequence -Tyr-Xaa-Val-Gly-|-Gly, in the processing of the potyviral polyprotein.. In terms of biological role, required for aphid transmission and also has proteolytic activity. Only cleaves a Gly-Gly dipeptide at its own C-terminus. Interacts with virions and aphid stylets. Acts as a suppressor of RNA-mediated gene silencing, also known as post-transcriptional gene silencing (PTGS), a mechanism of plant viral defense that limits the accumulation of viral RNAs. May have RNA-binding activity. Has helicase activity. It may be involved in replication. Functionally, indispensable for virus replication. Reduces the abundance of host transcripts related to jasmonic acid biosynthesis therefore altering the host defenses. In order to increase its own stability, decreases host protein degradation pathways. Its function is as follows. Indispensable for virus replication. In terms of biological role, mediates the cap-independent, EIF4E-dependent translation of viral genomic RNAs. Binds to the cap-binding site of host EIF4E and thus interferes with the host EIF4E-dependent mRNA export and translation. VPg-RNA directly binds EIF4E and is a template for transcription. Also forms trimeric complexes with EIF4E-EIF4G, which are templates for translation. Has RNA-binding and proteolytic activities. Functionally, an RNA-dependent RNA polymerase that plays an essential role in the virus replication. Its function is as follows. Involved in aphid transmission, cell-to-cell and systemis movement, encapsidation of the viral RNA and in the regulation of viral RNA amplification. The protein is Genome polyprotein of Peanut mottle virus (strain M).